The following is a 507-amino-acid chain: RNA-splicing ligase RtcB homolog (507 aa).

5 residues coordinate Mn(2+): D121, C124, H229, H261, and H355. 228–232 (NHYAE) contributes to the GMP binding site. Residues 355–356 (HN), 404–407 (GGTM), S411, 430–433 (HGAG), and K506 contribute to the GMP site. H430 acts as the GMP-histidine intermediate in catalysis.

This sequence belongs to the RtcB family. As to quaternary structure, catalytic component of the tRNA-splicing ligase complex. Mn(2+) serves as cofactor.

It catalyses the reaction a 3'-end 3'-phospho-ribonucleotide-RNA + a 5'-end dephospho-ribonucleoside-RNA + GTP = a ribonucleotidyl-ribonucleotide-RNA + GMP + diphosphate. It carries out the reaction a 3'-end 2',3'-cyclophospho-ribonucleotide-RNA + a 5'-end dephospho-ribonucleoside-RNA + GTP + H2O = a ribonucleotidyl-ribonucleotide-RNA + GMP + diphosphate + H(+). Catalytic subunit of the tRNA-splicing ligase complex that acts by directly joining spliced tRNA halves to mature-sized tRNAs by incorporating the precursor-derived splice junction phosphate into the mature tRNA as a canonical 3',5'-phosphodiester. May act as an RNA ligase with broad substrate specificity, and may function toward other RNAs. The polypeptide is RNA-splicing ligase RtcB homolog (Micromonas pusilla (strain CCMP1545) (Picoplanktonic green alga)).